Consider the following 638-residue polypeptide: Autolysin (638 aa).

The N-terminal stretch at 1 to 28 (MSLATRRFGAAAALLVAACVLCTAPAWA) is a signal peptide. A propeptide spans 29–183 (QNETTGTGMV…LKSILKGSQK (155 aa)) (activation peptide). Asn-30 carries N-linked (GlcNAc...) asparagine glycosylation. Positions 95–102 (PRCNVPRA) match the Cysteine switch motif. Cys-97 contacts Zn(2+). The N-linked (GlcNAc...) asparagine glycan is linked to Asn-126. The segment at 269 to 292 (VTPPPRPPRPPRPPPRAGSTISSL) is disordered. Positions 270 to 284 (TPPPRPPRPPRPPPR) are enriched in pro residues. The N-linked (GlcNAc...) asparagine glycan is linked to Asn-296. Position 396 (His-396) interacts with Zn(2+). The active site involves Glu-397. Zn(2+) contacts are provided by His-400 and His-406. N-linked (GlcNAc...) asparagine glycosylation is found at Asn-458, Asn-465, Asn-470, and Asn-523.

Belongs to the peptidase M11 family. Requires Zn(2+) as cofactor. Post-translationally, present in 2 forms: an inactive V-form in vegetative cells and an active and soluble G-form. The V-form enzyme may be converted to the G-form enzyme during gametic differentiation under nitrogen-starved conditions.

It is found in the periplasm. It localises to the secreted. Its subcellular location is the cell wall. It catalyses the reaction Cleavage of the proline- and hydroxyproline-rich proteins of the Chlamydomonas cell wall. Also cleaves azocasein, gelatin and Leu-Trp-Met-|-Arg-Phe-Ala.. Functionally, mediates digestion of the cell walls of the 2 mating type gametes during mating as a necessary prelude to cell fusion. This enzyme acts specifically on the framework proteins (inner wall) of the cell wall, cleaving several model peptides at specific sites. In Chlamydomonas reinhardtii (Chlamydomonas smithii), this protein is Autolysin.